A 68-amino-acid polypeptide reads, in one-letter code: uncharacterized protein (68 aa).

The signal sequence occupies residues 1 to 28; sequence MNKEQSADDPSVDLIRVKNMLNSTISMS.

This is an uncharacterized protein from Escherichia coli (strain K12).